The sequence spans 1483 residues: Tyrosine-protein kinase BAZ1B (1483 aa).

Residues 20–126 form the WAC domain; the sequence is EPLFTIPHTQ…GEECDFEVGK (107 aa). Residues 145–212 form a disordered region; the sequence is EEATEKKSDG…TSLKKGERKW (68 aa). Basic and acidic residues-rich tracts occupy residues 148–165 and 172–195; these read TEKK…DKEN and DHQK…DRAR. A phosphoserine mark is found at S152, S158, and S161. Residues 207-213 carry the C motif motif; the sequence is KGERKWA. T266 is modified (phosphothreonine). The tract at residues 302 to 333 is disordered; sequence NPSTKRKNTGSPDRKPSKKSKTDNSSLSSPLN. S330, S345, S347, S349, S361, and S374 each carry phosphoserine. 2 disordered regions span residues 379-432 and 446-470; these read HTNF…KTPK and GTQK…PHKH. Composition is skewed to basic residues over residues 384–395 and 423–432; these read IPKKGPPAKKPG and SPKKGLKTPK. Positions 533-586 form a coiled coil; it reads KRWASMSEEQRKEYLKKKREELKKKLKEKAKERREKEMLERLEKQKRYEDQELT. The 65-residue stretch at 604–668 folds into the DDT domain; it reads NTLFGDVAMV…LQTLLQDEIA (65 aa). 4 positions are modified to phosphoserine: S699, S705, S708, and S716. Positions 768–814 form a coiled coil; it reads TRQQMSAELWKERLAVLKEENDKKRAEKQKRKEMEAKNKENGKVENG. Positions 788-810 are enriched in basic and acidic residues; that stretch reads NDKKRAEKQKRKEMEAKNKENGK. The tract at residues 788 to 817 is disordered; that stretch reads NDKKRAEKQKRKEMEAKNKENGKVENGLGK. K826 participates in a covalent cross-link: Glycyl lysine isopeptide (Lys-Gly) (interchain with G-Cter in SUMO1); alternate. K826 participates in a covalent cross-link: Glycyl lysine isopeptide (Lys-Gly) (interchain with G-Cter in SUMO2); alternate. A coiled-coil region spans residues 850 to 893; sequence IQAKKEREIQEREMKVKLERQAEEERIRKHKAAAEKAFQEGIAK. K853 participates in a covalent cross-link: Glycyl lysine isopeptide (Lys-Gly) (interchain with G-Cter in SUMO2). S947 is subject to Phosphoserine. Glycyl lysine isopeptide (Lys-Gly) (interchain with G-Cter in SUMO2) cross-links involve residues K1043, K1089, and K1107. Residues 1184–1234 form a PHD-type zinc finger; the sequence is NARCKVCRKKGEDDKLILCDECNKAFHLFCLRPALYEVPDGEWQCPACQPA. The interval 1237-1326 is disordered; the sequence is RRNSRGRNYT…PKAPPVDDAE (90 aa). The stretch at 1245-1283 forms a coiled coil; it reads YTEESASEDSEDDESDEEEEEEEEEEEEEDYEVAGLRLR. Residues 1249–1276 are compositionally biased toward acidic residues; sequence SASEDSEDDESDEEEEEEEEEEEEEDYE. Composition is skewed to basic residues over residues 1282-1292 and 1301-1316; these read LRPRKTIRGKH and SGRR…RRSQ. At S1315 the chain carries Phosphoserine. The residue at position 1335 (K1335) is an N6-acetyllysine. One can recognise a Bromo domain in the interval 1339-1443; that stretch reads RRQSLELQKC…QCLVALLHKH (105 aa). A phosphoserine mark is found at S1342 and S1468. Residues 1455-1483 are disordered; sequence KKFPDRLAEDEGDSEPEAVGQSRGRRQKK.

The protein belongs to the WAL family. BAZ1B subfamily. In terms of assembly, component of the WICH-1 ISWI chromatin remodeling complex, at least composed of SMARCA1 and BAZ1B/WSTF, which regulates the spacing of histone octamers on the DNA template to facilitate access to DNA. Within the WICH-1 ISWI chromatin remodeling complex interacts with SMARCA1; the interaction is direct. Component of the WICH-5 ISWI chromatin remodeling complex (also called the WICH complex), at least composed of SMARCA5/SNF2H and BAZ1B/WSTF, which regulates the spacing of histone octamers on the DNA template to facilitate access to DNA. Within the WICH-5 ISWI chromatin remodeling complex interacts with SMARCA5/SNF2H; the interaction is direct. Component of the B-WICH chromatin remodeling complex, at least composed of SMARCA5/SNF2H, BAZ1B/WSTF, SF3B1, DEK, MYO1C, ERCC6, MYBBP1A and DDX21. Within the B-WICH chromatin remodeling complex, interacts with SMARCA5/SNF2H, DDX21, DEK, MYBBP1A, SF3B1, ERCC6 and MYO1C. Interacts with PCNA; the interaction is direct and is required for BAZ1B/WSTF binding to replication foci during S phase. Interacts with CDT1. The cofactor is Mn(2+). As to expression, ubiquitously expressed with high levels of expression in heart, brain, placenta, skeletal muscle and ovary.

Its subcellular location is the nucleus. It catalyses the reaction L-tyrosyl-[protein] + ATP = O-phospho-L-tyrosyl-[protein] + ADP + H(+). In terms of biological role, atypical tyrosine-protein kinase that plays a central role in chromatin remodeling and acts as a transcription regulator. Involved in DNA damage response by phosphorylating 'Tyr-142' of histone H2AX (H2AXY142ph). H2AXY142ph plays a central role in DNA repair and acts as a mark that distinguishes between apoptotic and repair responses to genotoxic stress. Regulatory subunit of the ATP-dependent WICH-1 and WICH-5 ISWI chromatin remodeling complexes, which form ordered nucleosome arrays on chromatin and facilitate access to DNA during DNA-templated processes such as DNA replication, transcription, and repair. Both complexes regulate the spacing of nucleosomes along the chromatin and have the ability to slide mononucleosomes to the center of a DNA template. The WICH-1 ISWI chromatin remodeling complex has a lower ATP hydrolysis rate than the WICH-5 ISWI chromatin remodeling complex. The WICH-5 ISWI chromatin-remodeling complex regulates the transcription of various genes, has a role in RNA polymerase I transcription. Within the B-WICH complex has a role in RNA polymerase III transcription. Mediates the recruitment of the WICH-5 ISWI chromatin remodeling complex to replication foci during DNA replication. The sequence is that of Tyrosine-protein kinase BAZ1B (BAZ1B) from Homo sapiens (Human).